The chain runs to 339 residues: Non-homologous end joining protein Ku (339 aa).

The 178-residue stretch at 10 to 187 (ITFGLVNIPV…LPKATTGKPT (178 aa)) folds into the Ku domain. Disordered regions lie at residues 230–251 (DSGKTHQLTPPAEEEEAPRQGA) and 263–339 (SLGQ…KHAA). A compositionally biased stretch (basic and acidic residues) spans 267–277 (RGKEDKEDATP). Over residues 278–289 (ARRKAPARHAAA) the composition is skewed to basic residues. The segment covering 290-310 (RKQPAAKRAATPPAKRASTAA) has biased composition (low complexity).

The protein belongs to the prokaryotic Ku family. In terms of assembly, homodimer. Interacts with LigD.

In terms of biological role, with LigD forms a non-homologous end joining (NHEJ) DNA repair enzyme, which repairs dsDNA breaks with reduced fidelity. Binds linear dsDNA with 5'- and 3'- overhangs but not closed circular dsDNA nor ssDNA. Recruits and stimulates the ligase activity of LigD. This Cupriavidus necator (strain ATCC 17699 / DSM 428 / KCTC 22496 / NCIMB 10442 / H16 / Stanier 337) (Ralstonia eutropha) protein is Non-homologous end joining protein Ku.